We begin with the raw amino-acid sequence, 128 residues long: Early 3 14.7 kDa protein (128 aa).

This sequence belongs to the adenoviridae E3_15 family. In terms of assembly, may bind to host IKBKG, OPTN and RRAGA.

Its subcellular location is the host cytoplasm. The protein localises to the host nucleus. In terms of biological role, may prevent Nf-kappaB activation by immune signals like Tumor necrosis factor, presumably by inhibiting NFKB1 dimer DNA-binding. May act directly at the TNF receptor to inhibit signaling. This Human adenovirus C serotype 2 (HAdV-2) protein is Early 3 14.7 kDa protein.